The chain runs to 957 residues: Kinesin heavy chain isoform 5C (957 aa).

Residues S8–I327 form the Kinesin motor domain. Q87, S89, S90, G91, K92, T93, H94, and K99 together coordinate ATP. The tract at residues V174–K315 is microtubule-binding. The stretch at V406–A923 forms a coiled coil. Residues R859–Q956 form a globular region. Residues K911–K957 form a disordered region.

This sequence belongs to the TRAFAC class myosin-kinesin ATPase superfamily. Kinesin family. Kinesin subfamily. In terms of assembly, oligomer composed of two heavy chains and two light chains. Interacts with GRIP1 and KLC3. Interacts with TRAK1. Interacts with ZFYVE27. Highest expression in brain, prostate and testis, and moderate expression in kidney, small intestine and ovary.

Its subcellular location is the cytoplasm. It localises to the cytoskeleton. The protein localises to the cell projection. It is found in the dendrite. It carries out the reaction ATP + H2O = ADP + phosphate + H(+). Functionally, microtubule-associated force-producing protein that may play a role in organelle transport. Has ATPase activity. Involved in synaptic transmission. Mediates dendritic trafficking of mRNAs. Required for anterograde axonal transportation of MAPK8IP3/JIP3 which is essential for MAPK8IP3/JIP3 function in axon elongation. This chain is Kinesin heavy chain isoform 5C (KIF5C), found in Homo sapiens (Human).